The primary structure comprises 424 residues: Methylthioribose-1-phosphate isomerase (424 aa).

The active-site Proton donor is the D281.

This sequence belongs to the eIF-2B alpha/beta/delta subunits family. MtnA subfamily.

Its subcellular location is the cytoplasm. The protein localises to the nucleus. It carries out the reaction 5-(methylsulfanyl)-alpha-D-ribose 1-phosphate = 5-(methylsulfanyl)-D-ribulose 1-phosphate. The protein operates within amino-acid biosynthesis; L-methionine biosynthesis via salvage pathway; L-methionine from S-methyl-5-thio-alpha-D-ribose 1-phosphate: step 1/6. Its function is as follows. Catalyzes the interconversion of methylthioribose-1-phosphate (MTR-1-P) into methylthioribulose-1-phosphate (MTRu-1-P). The protein is Methylthioribose-1-phosphate isomerase of Candida dubliniensis (strain CD36 / ATCC MYA-646 / CBS 7987 / NCPF 3949 / NRRL Y-17841) (Yeast).